The following is a 145-amino-acid chain: D-aminoacyl-tRNA deacylase (145 aa).

Residues 137 to 138 carry the Gly-cisPro motif, important for rejection of L-amino acids motif; it reads GP.

It belongs to the DTD family. In terms of assembly, homodimer.

It is found in the cytoplasm. The enzyme catalyses glycyl-tRNA(Ala) + H2O = tRNA(Ala) + glycine + H(+). It catalyses the reaction a D-aminoacyl-tRNA + H2O = a tRNA + a D-alpha-amino acid + H(+). An aminoacyl-tRNA editing enzyme that deacylates mischarged D-aminoacyl-tRNAs. Also deacylates mischarged glycyl-tRNA(Ala), protecting cells against glycine mischarging by AlaRS. Acts via tRNA-based rather than protein-based catalysis; rejects L-amino acids rather than detecting D-amino acids in the active site. By recycling D-aminoacyl-tRNA to D-amino acids and free tRNA molecules, this enzyme counteracts the toxicity associated with the formation of D-aminoacyl-tRNA entities in vivo and helps enforce protein L-homochirality. This chain is D-aminoacyl-tRNA deacylase, found in Shewanella woodyi (strain ATCC 51908 / MS32).